The following is a 157-amino-acid chain: Hydra actinoporin-like toxin 3 (157 aa).

A signal peptide spans 1-14; it reads LEATVSRNKKYKFT. Positions 129-131 match the Cell attachment site motif; it reads IAG.

Belongs to the actinoporin family. HALT subfamily. As to quaternary structure, octamer or nonamer in membranes. Monomer in the soluble state. In vitro, interacts with folate receptor alpha (of target organism).

It localises to the nematocyst. It is found in the secreted. The protein localises to the target cell membrane. Pore-forming protein that forms hydrophilic pores and causes cytolysis. Compared to equinatoxin-2 (AC P61914), it reveals lower cytolysis activity (5-12-fold difference, tested on erythrocytes), a larger pore size (probably 2-3 nm) and different affinity to membrane lipids (100-fold lower affinity to sphingomyelin). Binds to the two sphingolipids, lysophosphatidic acid (LPA) and sphingosine-1-phosphate (S1P). Does not bind (or only weakly) to sulfatides (SFT). Shows cytolytic activity on HeLa cells, with a different potency than its paralogs (from most potent to less potent: HALT-4&gt;HALT-6~HALT-1&gt;HALT-3&gt;HALT-7&gt;HALT-2). Pore formation is a multi-step process that involves specific recognition of membrane lipid by a protein aromatic residues rich region, firm binding to the membrane (mainly driven by hydrophobic interactions) accompanied by the transfer of the N-terminal region to the lipid-water interface and finally pore formation after oligomerization of monomers. In vitro, binds to the folate receptor alpha (FOLR1), a GPI-anchored membrane protein that plays a major role in the uptake of folate/folic acid into cells via endocytosis, suggesting a possible involvement of this receptor in the mechanism of HALT-1-induced cell lysis. In vivo, does not cause visible paralysis in larvae of the blowfly Sarcophaga faculata, the most common arthropod prey of Hydra. The polypeptide is Hydra actinoporin-like toxin 3 (Hydra vulgaris (Hydra)).